The primary structure comprises 372 residues: MAFKSLLSFVSVIGALQGANAALTRRVACPDGVNTATNAACCQLFAVREDLQQNLFHGGLCTAEAHESLRLTFHDAIAISPALEAQGIFGGGGADGSIAIFPEIETNFHPNIGLDEIIELQKPFIARHNISVADFIQFAGAIGASNCAGAPQLAAFVGRKDATQPAPDGLVPEPFHTPDQIFDRLADASQGEFDPILTVWLLTAHTVAAANDVDPTKSGLPFDSTPELWDTQFFLETQLRGTSFPGSGGNQGEVESPLAGEMRLQSDHTIARDSRTACEWQSFVDNQPKAQQMFQFVFHDLSIFGQDINTLVDCTEVVPIPADPQGHTHFPAGLSNADIEQACAETPFPTFPTDPGPKTAVAPVPKPPAARK.

The signal sequence occupies residues 1 to 26 (MAFKSLLSFVSVIGALQGANAALTRR). Residue His-74 is the Proton acceptor of the active site. 4 residues coordinate Ca(2+): Asp-75, Gly-93, Asp-95, and Ser-97. The N-linked (GlcNAc...) asparagine glycan is linked to Asn-129. His-205 provides a ligand contact to heme b. The Ca(2+) site is built by Thr-206, Asp-223, Thr-225, Leu-228, and Asp-230. The tract at residues 346 to 372 (TPFPTFPTDPGPKTAVAPVPKPPAARK) is disordered.

Belongs to the peroxidase family. Ligninase subfamily. Ca(2+) is required as a cofactor. The cofactor is heme b.

The enzyme catalyses 1-(3,4-dimethoxyphenyl)-2-(2-methoxyphenoxy)propane-1,3-diol + H2O2 = 3,4-dimethoxybenzaldehyde + guaiacol + glycolaldehyde + H2O. The catalysed reaction is 2 (3,4-dimethoxyphenyl)methanol + H2O2 = 2 (3,4-dimethoxyphenyl)methanol radical + 2 H2O. The protein operates within secondary metabolite metabolism; lignin degradation. Its function is as follows. Depolymerization of lignin. Catalyzes the C(alpha)-C(beta) cleavage of the propyl side chains of lignin. In Trametes versicolor (White-rot fungus), this protein is Ligninase C.